A 38-amino-acid chain; its full sequence is Photosystem II reaction center protein L (38 aa).

Residues 17-37 (SLFIGLLLVLVLALLFSSYFF) form a helical membrane-spanning segment.

This sequence belongs to the PsbL family. As to quaternary structure, PSII is composed of 1 copy each of membrane proteins PsbA, PsbB, PsbC, PsbD, PsbE, PsbF, PsbH, PsbI, PsbJ, PsbK, PsbL, PsbM, PsbT, PsbX, PsbY, PsbZ, Psb30/Ycf12, peripheral proteins PsbO, CyanoQ (PsbQ), PsbU, PsbV and a large number of cofactors. It forms dimeric complexes.

The protein localises to the cellular thylakoid membrane. One of the components of the core complex of photosystem II (PSII). PSII is a light-driven water:plastoquinone oxidoreductase that uses light energy to abstract electrons from H(2)O, generating O(2) and a proton gradient subsequently used for ATP formation. It consists of a core antenna complex that captures photons, and an electron transfer chain that converts photonic excitation into a charge separation. This subunit is found at the monomer-monomer interface and is required for correct PSII assembly and/or dimerization. This chain is Photosystem II reaction center protein L, found in Acaryochloris marina (strain MBIC 11017).